Here is an 873-residue protein sequence, read N- to C-terminus: MASRRKSTTPCMVLASEQDPDLELISDLDEGPPVLTPVENTRAESISSDEEVHESVDSDNQQNKKVEGGYECKYCTFQTPDLNMFTFHVDSEHPNVVLNSSYVCVECNFLTKRYDALSEHNLKYHPGEENFKLTMVKRNNQTIFEQTINDLTFDGSFIKEENAEQAESTEVSSSGISISKTPIMKMMKNKVENKRIAVHHNSVEDVPEEKENEIKPDREEIVENPSSSASESNTSTSIVNRIHPSTASTVVTPAAVLPGLAQVITAVSAQQNSNLIPKVLIPVNSIPTYNAALDNNPLLLNTYNKFPYPTMSEITVLSAQAKYTEEQIKIWFSAQRLKHGVSWTPEEVEEARRKQFNGTVHTVPQTITVIPTHISTGSNGLPSILQTCQIVGQPGLVLTQVAGTNTLPVTAPIALTVAGVPSQNNIQKSQVPAAQPTAETKPATAAVPTSQSVKHETALVNPDSFGIRAKKTKEQLAELKVSYLKNQFPHDSEIIRLMKITGLTKGEIKKWFSDTRYNQRNSKSNQCLHLNNDSSTTIIIDSSDETTESPTVGTAQPKQSWNPFPDFTPQKFKEKTAEQLRVLQASFLNSSVLTDEELNRLRAQTKLTRREIDAWFTEKKKSKALKEEKMEIDESNAGSSKEEAGETSPGDESGAPKSGSTGKICKKTPEQLHMLKSAFVRTQWPSPEEYDKLAKESGLARTDIVSWFGDTRYAWKNGNLKWYYYYQSANSSSMNGLSSLRKRGRGRPKGRGRGRPRGRPRGSKRINNWDRGPSLIKFKTGTAILKDYYLKHKFLNEQDLDELVNKSHMGYEQVREWFAERQRRSELGIELFEENEEEDEVIDDQEEDEEETDDSDTWEPPRHVKRKLSKSDD.

The disordered stretch occupies residues 24-63 (LISDLDEGPPVLTPVENTRAESISSDEEVHESVDSDNQQN). Residue T36 is modified to Phosphothreonine. Phosphoserine is present on residues S45, S47, and S48. 2 C2H2-type zinc fingers span residues 70 to 93 (YECKYCTFQTPDLNMFTFHVDSEH) and 102 to 125 (YVCVECNFLTKRYDALSEHNLKYH). Residue K159 forms a Glycyl lysine isopeptide (Lys-Gly) (interchain with G-Cter in SUMO2) linkage. The interval 200-236 (HNSVEDVPEEKENEIKPDREEIVENPSSSASESNTST) is disordered. Position 202 is a phosphoserine (S202). The segment covering 212–221 (NEIKPDREEI) has biased composition (basic and acidic residues). Over residues 223–236 (ENPSSSASESNTST) the composition is skewed to low complexity. The interval 272–432 (NSNLIPKVLI…QNNIQKSQVP (161 aa)) is required for dimerization. Positions 272-564 (NSNLIPKVLI…AQPKQSWNPF (293 aa)) are required for interaction with NFYA. Positions 284-346 (NSIPTYNAAL…LKHGVSWTPE (63 aa)) form a DNA-binding region, homeobox 1. Glycyl lysine isopeptide (Lys-Gly) (interchain with G-Cter in SUMO2) cross-links involve residues K441, K454, K485, and K629. 2 DNA-binding regions (homeobox) span residues 464-526 (SFGI…KSNQ) and 569-630 (PQKF…EEKM). Disordered stretches follow at residues 626-667 (KEEK…ICKK) and 732-769 (SSMNGLSSLRKRGRGRPKGRGRGRPRGRPRGSKRINNW). S648 bears the Phosphoserine mark. A DNA-binding region (homeobox 4) is located at residues 660-722 (STGKICKKTP…YAWKNGNLKW (63 aa)). Positions 734–768 (MNGLSSLRKRGRGRPKGRGRGRPRGRPRGSKRINN) are required for nuclear localization. Residues 740–764 (LRKRGRGRPKGRGRGRPRGRPRGSK) show a composition bias toward basic residues. S774 is subject to Phosphoserine. A DNA-binding region (homeobox 5) is located at residues 777–832 (KFKTGTAILKDYYLKHKFLNEQDLDELVNKSHMGYEQVREWFAERQRRSELGIELF). Positions 829–873 (IELFEENEEEDEVIDDQEEDEEETDDSDTWEPPRHVKRKLSKSDD) are disordered. Over residues 831 to 857 (LFEENEEEDEVIDDQEEDEEETDDSDT) the composition is skewed to acidic residues. The segment at 831 to 873 (LFEENEEEDEVIDDQEEDEEETDDSDTWEPPRHVKRKLSKSDD) is required for repressor activity. Over residues 863–873 (HVKRKLSKSDD) the composition is skewed to basic residues.

Belongs to the ZHX family. Forms homodimers. Heterodimer (via HD1 domain) with ZHX2 (via HD1 domain). Also forms a heterodimer with ZHX3 which is a prerequisite for repressor activity. Interacts with ATF7IP and NFYA. Interacts (via homeobox domains) with DNMT3B (via PWWP domain).

It localises to the nucleus. Acts as a transcriptional repressor. Increases DNMT3B-mediated repressive transcriptional activity when DNMT3B is tethered to DNA. May link molecule between DNMT3B and other co-repressor proteins. This Pan troglodytes (Chimpanzee) protein is Zinc fingers and homeoboxes protein 1 (ZHX1).